The sequence spans 902 residues: Protein translocase subunit SecA (902 aa).

ATP-binding positions include glutamine 87, 105–109 (GEGKT), and aspartate 512. Positions 847–902 (DAERLARQQQLSHLDDQSAAAQEMASQTGDRKIGRNDPCPCGSGKKYKQCHGRLNA) are disordered. Residues cysteine 885, cysteine 887, cysteine 896, and histidine 897 each contribute to the Zn(2+) site. Positions 891–902 (KKYKQCHGRLNA) are enriched in basic residues.

Belongs to the SecA family. As to quaternary structure, monomer and homodimer. Part of the essential Sec protein translocation apparatus which comprises SecA, SecYEG and auxiliary proteins SecDF-YajC and YidC. The cofactor is Zn(2+).

It localises to the cell inner membrane. The protein resides in the cytoplasm. It carries out the reaction ATP + H2O + cellular proteinSide 1 = ADP + phosphate + cellular proteinSide 2.. Its function is as follows. Part of the Sec protein translocase complex. Interacts with the SecYEG preprotein conducting channel. Has a central role in coupling the hydrolysis of ATP to the transfer of proteins into and across the cell membrane, serving both as a receptor for the preprotein-SecB complex and as an ATP-driven molecular motor driving the stepwise translocation of polypeptide chains across the membrane. This is Protein translocase subunit SecA from Edwardsiella ictaluri (strain 93-146).